A 521-amino-acid polypeptide reads, in one-letter code: Cytochrome P450 1A1 (521 aa).

Substrate is bound at residue F229. C463 lines the heme pocket.

Belongs to the cytochrome P450 family. Heme serves as cofactor.

Its subcellular location is the endoplasmic reticulum membrane. It localises to the microsome membrane. The catalysed reaction is an organic molecule + reduced [NADPH--hemoprotein reductase] + O2 = an alcohol + oxidized [NADPH--hemoprotein reductase] + H2O + H(+). Its function is as follows. Cytochromes P450 are a group of heme-thiolate monooxygenases. They oxidize a variety of structurally unrelated compounds, including steroids, fatty acids, and xenobiotics. This is Cytochrome P450 1A1 (cyp1a1) from Pleuronectes platessa (European plaice).